Reading from the N-terminus, the 163-residue chain is MNLNATILGQALSFILFVWFCMKYIWPPIIFAIETRQKNIEESLISLKKAEEELIIIQKKMNQIIQDSKEKASFIINEANKKKSIILEDAKSIALEESKKIFLRNQLEIDLKVMQVRKNLHKEIVDLSILIAEKIIKDNIQKDQYKYSIKKLIVSLSKDKKLI.

The chain crosses the membrane as a helical span at residues 13 to 33 (SFILFVWFCMKYIWPPIIFAI).

Belongs to the ATPase B chain family. As to quaternary structure, F-type ATPases have 2 components, F(1) - the catalytic core - and F(0) - the membrane proton channel. F(1) has five subunits: alpha(3), beta(3), gamma(1), delta(1), epsilon(1). F(0) has three main subunits: a(1), b(2) and c(10-14). The alpha and beta chains form an alternating ring which encloses part of the gamma chain. F(1) is attached to F(0) by a central stalk formed by the gamma and epsilon chains, while a peripheral stalk is formed by the delta and b chains.

The protein resides in the cell membrane. In terms of biological role, f(1)F(0) ATP synthase produces ATP from ADP in the presence of a proton or sodium gradient. F-type ATPases consist of two structural domains, F(1) containing the extramembraneous catalytic core and F(0) containing the membrane proton channel, linked together by a central stalk and a peripheral stalk. During catalysis, ATP synthesis in the catalytic domain of F(1) is coupled via a rotary mechanism of the central stalk subunits to proton translocation. Its function is as follows. Component of the F(0) channel, it forms part of the peripheral stalk, linking F(1) to F(0). The polypeptide is ATP synthase subunit b (Buchnera aphidicola subsp. Schizaphis graminum (strain Sg)).